The following is a 104-amino-acid chain: Large ribosomal subunit protein bL21 (104 aa).

Belongs to the bacterial ribosomal protein bL21 family. As to quaternary structure, part of the 50S ribosomal subunit. Contacts protein L20.

This protein binds to 23S rRNA in the presence of protein L20. This chain is Large ribosomal subunit protein bL21, found in Streptococcus gordonii (strain Challis / ATCC 35105 / BCRC 15272 / CH1 / DL1 / V288).